A 395-amino-acid polypeptide reads, in one-letter code: S-adenosylmethionine synthase (395 aa).

His-14 contacts ATP. Asp-16 serves as a coordination point for Mg(2+). Glu-42 serves as a coordination point for K(+). Glu-55 and Gln-98 together coordinate L-methionine. The tract at residues 98–108 (QSPDIALGVDK) is flexible loop. ATP-binding positions include 174–176 (DGK), 240–241 (RF), Asp-249, 255–256 (RK), Ala-272, and Lys-276. Residue Asp-249 participates in L-methionine binding. Lys-280 lines the L-methionine pocket.

The protein belongs to the AdoMet synthase family. In terms of assembly, homotetramer; dimer of dimers. The cofactor is Mg(2+). K(+) is required as a cofactor.

It localises to the cytoplasm. It catalyses the reaction L-methionine + ATP + H2O = S-adenosyl-L-methionine + phosphate + diphosphate. The protein operates within amino-acid biosynthesis; S-adenosyl-L-methionine biosynthesis; S-adenosyl-L-methionine from L-methionine: step 1/1. In terms of biological role, catalyzes the formation of S-adenosylmethionine (AdoMet) from methionine and ATP. The overall synthetic reaction is composed of two sequential steps, AdoMet formation and the subsequent tripolyphosphate hydrolysis which occurs prior to release of AdoMet from the enzyme. The protein is S-adenosylmethionine synthase of Thermotoga maritima (strain ATCC 43589 / DSM 3109 / JCM 10099 / NBRC 100826 / MSB8).